The chain runs to 206 residues: dITP/XTP pyrophosphatase (206 aa).

Residue 7–12 (TSNKDK) coordinates substrate. The Proton acceptor role is filled by Asp-74. Asp-74 provides a ligand contact to Mg(2+). Substrate is bound by residues Ser-75, 159–162 (FGYD), Lys-182, and 187–188 (HR).

The protein belongs to the HAM1 NTPase family. As to quaternary structure, homodimer. Mg(2+) is required as a cofactor.

It catalyses the reaction XTP + H2O = XMP + diphosphate + H(+). It carries out the reaction dITP + H2O = dIMP + diphosphate + H(+). The enzyme catalyses ITP + H2O = IMP + diphosphate + H(+). Its function is as follows. Pyrophosphatase that catalyzes the hydrolysis of nucleoside triphosphates to their monophosphate derivatives, with a high preference for the non-canonical purine nucleotides XTP (xanthosine triphosphate), dITP (deoxyinosine triphosphate) and ITP. Seems to function as a house-cleaning enzyme that removes non-canonical purine nucleotides from the nucleotide pool, thus preventing their incorporation into DNA/RNA and avoiding chromosomal lesions. The polypeptide is dITP/XTP pyrophosphatase (Campylobacter hominis (strain ATCC BAA-381 / DSM 21671 / CCUG 45161 / LMG 19568 / NCTC 13146 / CH001A)).